The chain runs to 422 residues: Tyrosine--tRNA ligase (422 aa).

Residue Y36 coordinates L-tyrosine. Positions 41-50 match the 'HIGH' region motif; the sequence is PTADSLHIGH. Residues Y175 and Q179 each contribute to the L-tyrosine site. The 'KMSKS' region signature appears at 235-239; that stretch reads KFGKT. K238 contacts ATP. The region spanning 354-411 is the S4 RNA-binding domain; the sequence is TSLQEALTKSKLATSRSQARYFIKSNAITINAHKQSKIEYIFQDSDRIYNLYTLLKRG.

Belongs to the class-I aminoacyl-tRNA synthetase family. TyrS type 1 subfamily. In terms of assembly, homodimer.

The protein localises to the cytoplasm. It carries out the reaction tRNA(Tyr) + L-tyrosine + ATP = L-tyrosyl-tRNA(Tyr) + AMP + diphosphate + H(+). In terms of biological role, catalyzes the attachment of tyrosine to tRNA(Tyr) in a two-step reaction: tyrosine is first activated by ATP to form Tyr-AMP and then transferred to the acceptor end of tRNA(Tyr). The sequence is that of Tyrosine--tRNA ligase from Blochmanniella floridana.